The primary structure comprises 889 residues: Envelope glycoprotein gp160 (889 aa).

A signal peptide spans 1 to 22; that stretch reads MGCLGNQLLIALLLLSASGIYC. Topologically, residues 23-704 are extracellular; it reads VQYVTVFYGI…TSWIKYIQYG (682 aa). The N-linked (GlcNAc...) asparagine; by host glycan is linked to asparagine 37. Cysteines 44 and 57 form a disulfide. N-linked (GlcNAc...) asparagine; by host glycans are attached at residues asparagine 70 and asparagine 114. 5 disulfide bridges follow: cysteine 101–cysteine 226, cysteine 108–cysteine 217, cysteine 113–cysteine 175, cysteine 239–cysteine 269, and cysteine 249–cysteine 261. The interval 113 to 174 is V1; that stretch reads CNKSETDRWG…TGLEQEPMVS (62 aa). Positions 120–145 are disordered; it reads RWGLTGTPAPTTTQTTTTQASTTPTS. Over residues 126–145 the composition is skewed to low complexity; the sequence is TPAPTTTQTTTTQASTTPTS. 19 N-linked (GlcNAc...) asparagine; by host glycosylation sites follow: asparagine 153, asparagine 163, asparagine 178, asparagine 191, asparagine 206, asparagine 218, asparagine 250, asparagine 253, asparagine 260, asparagine 284, asparagine 290, asparagine 301, asparagine 312, asparagine 322, asparagine 377, asparagine 422, asparagine 470, asparagine 486, and asparagine 489. Residues 175–217 are V2; it reads CKFNMTGLKRDKKREYNETWYSRDLVCEQNSNETDSKCYMNHC. The V3 stretch occupies residues 317–349; sequence CRRPGNKTVLPVTIMSGLVFHSQPINERPKQAW. An intrachain disulfide couples cysteine 317 to cysteine 350. Intrachain disulfides connect cysteine 401-cysteine 469 and cysteine 408-cysteine 442. A V4 region spans residues 408–442; that stretch reads CKMNWFLNWVENIQNGSRWTSQNQKERQRRNYVPC. The interval 485 to 492 is V5; the sequence is GNETNITM. The fusion peptide stretch occupies residues 536–556; that stretch reads GVFVLGFLGFLATAGSAMSAA. The segment at 599–615 is immunosuppression; sequence LQTRVTAIEKYLKDQAQ. Residues asparagine 635, asparagine 644, and asparagine 660 are each glycosylated (N-linked (GlcNAc...) asparagine; by host). A coiled-coil region spans residues 648-675; that stretch reads QEWEKQVNFLEANITQSLEEAQIQQEKN. The segment at 681 to 702 is MPER; binding to GalCer; it reads KLNSWDIFGNWFDLTSWIKYIQ. Residues 705-725 traverse the membrane as a helical segment; the sequence is VLIVLGVIGLRIVIYVVQMLA. Over 726–889 the chain is Cytoplasmic; the sequence is RLRQGYRPVF…IRQGLELTLL (164 aa). A YXXV motif; contains endocytosis signal motif is present at residues 731–734; the sequence is YRPV. Cysteine 797 carries the S-palmitoyl cysteine; by host lipid modification. The short motif at 888-889 is the Di-leucine internalization motif element; sequence LL.

As to quaternary structure, the mature envelope protein (Env) consists of a homotrimer of non-covalently associated gp120-gp41 heterodimers. The resulting complex protrudes from the virus surface as a spike. Interacts with host CD4 and CCR5. Gp120 also interacts with the C-type lectins CD209/DC-SIGN and CLEC4M/DC-SIGNR (collectively referred to as DC-SIGN(R)). In terms of assembly, the mature envelope protein (Env) consists of a homotrimer of non-covalently associated gp120-gp41 heterodimers. The resulting complex protrudes from the virus surface as a spike. In terms of processing, specific enzymatic cleavages in vivo yield mature proteins. Envelope glycoproteins are synthesized as an inactive precursor that is heavily N-glycosylated and processed likely by host cell furin in the Golgi to yield the mature SU and TM proteins. The cleavage site between SU and TM requires the minimal sequence [KR]-X-[KR]-R. Post-translationally, palmitoylation of the transmembrane protein and of Env polyprotein (prior to its proteolytic cleavage) is essential for their association with host cell membrane lipid rafts. Palmitoylation is therefore required for envelope trafficking to classical lipid rafts, but not for viral replication.

The protein resides in the virion membrane. It is found in the host cell membrane. The protein localises to the host endosome membrane. Functionally, the surface protein gp120 (SU) attaches the virus to the host lymphoid cell by binding to the primary receptor CD4. This interaction induces a structural rearrangement creating a high affinity binding site for a chemokine coreceptor like CCR5. This peculiar 2 stage receptor-interaction strategy allows gp120 to maintain the highly conserved coreceptor-binding site in a cryptic conformation, protected from neutralizing antibodies. These changes are transmitted to the transmembrane protein gp41 and are thought to activate its fusogenic potential by unmasking its fusion peptide. Its function is as follows. Surface protein gp120 (SU) may target the virus to gut-associated lymphoid tissue (GALT) by binding host ITGA4/ITGB7 (alpha-4/beta-7 integrins), a complex that mediates T-cell migration to the GALT. Interaction between gp120 and ITGA4/ITGB7 would allow the virus to enter GALT early in the infection, infecting and killing most of GALT's resting CD4+ T-cells. This T-cell depletion is believed to be the major insult to the host immune system leading to AIDS. In terms of biological role, the surface protein gp120 is a ligand for CD209/DC-SIGN and CLEC4M/DC-SIGNR, which are respectively found on dendritic cells (DCs), and on endothelial cells of liver sinusoids and lymph node sinuses. These interactions allow capture of viral particles at mucosal surfaces by these cells and subsequent transmission to permissive cells. DCs are professional antigen presenting cells, critical for host immunity by inducing specific immune responses against a broad variety of pathogens. They act as sentinels in various tissues where they take up antigen, process it, and present it to T-cells following migration to lymphoid organs. SIV subverts the migration properties of dendritic cells to gain access to CD4+ T-cells in lymph nodes. Virus transmission to permissive T-cells occurs either in trans (without DCs infection, through viral capture and transmission), or in cis (following DCs productive infection, through the usual CD4-gp120 interaction), thereby inducing a robust infection. In trans infection, bound virions remain infectious over days and it is proposed that they are not degraded, but protected in non-lysosomal acidic organelles within the DCs close to the cell membrane thus contributing to the viral infectious potential during DCs' migration from the periphery to the lymphoid tissues. On arrival at lymphoid tissues, intact virions recycle back to DCs' cell surface allowing virus transmission to CD4+ T-cells. Virion capture also seems to lead to MHC-II-restricted viral antigen presentation, and probably to the activation of SIV-specific CD4+ cells. The transmembrane protein gp41 (TM) acts as a class I viral fusion protein. Under the current model, the protein has at least 3 conformational states: pre-fusion native state, pre-hairpin intermediate state, and post-fusion hairpin state. During fusion of viral and target intracellular membranes, the coiled coil regions (heptad repeats) assume a trimer-of-hairpins structure, positioning the fusion peptide in close proximity to the C-terminal region of the ectodomain. The formation of this structure appears to drive apposition and subsequent fusion of viral and target cell membranes. Complete fusion occurs in host cell endosomes. The virus undergoes clathrin-dependent internalization long before endosomal fusion, thus minimizing the surface exposure of conserved viral epitopes during fusion and reducing the efficacy of inhibitors targeting these epitopes. Membranes fusion leads to delivery of the nucleocapsid into the cytoplasm. Functionally, the envelope glycoprotein gp160 precursor down-modulates cell surface CD4 antigen by interacting with it in the endoplasmic reticulum and blocking its transport to the cell surface. Its function is as follows. The gp120-gp41 heterodimer allows rapid transcytosis of the virus through CD4 negative cells such as simple epithelial monolayers of the intestinal, rectal and endocervical epithelial barriers. Both gp120 and gp41 specifically recognize glycosphingolipids galactosyl-ceramide (GalCer) or 3' sulfo-galactosyl-ceramide (GalS) present in the lipid rafts structures of epithelial cells. Binding to these alternative receptors allows the rapid transcytosis of the virus through the epithelial cells. This transcytotic vesicle-mediated transport of virions from the apical side to the basolateral side of the epithelial cells does not involve infection of the cells themselves. The sequence is that of Envelope glycoprotein gp160 (env) from Simian immunodeficiency virus (isolate PBj14/BCL-3) (SIV-sm).